Here is a 147-residue protein sequence, read N- to C-terminus: Proteinase inhibitor type-2 (147 aa).

Positions 1-25 (MAVHKEVSFVAYLLIVLGMFLYVDA) are cleaved as a signal peptide. Repeat copies occupy residues 25-81 (ALGC…DPKN) and 82-141 (PKAC…DEPK). 8 disulfides stabilise this stretch: Cys28/Cys116, Cys32/Cys112, Cys40/Cys122, Cys52/Cys89, Cys55/Cys73, Cys56/Cys85, Cys62/Cys98, and Cys115/Cys133.

The protein belongs to the protease inhibitor I20 (potato type II proteinase inhibitor) family.

The sequence is that of Proteinase inhibitor type-2 from Solanum tuberosum (Potato).